We begin with the raw amino-acid sequence, 194 residues long: Flagellin A2 (194 aa).

Positions 1 to 12 (MFEFITDEDERG) are excised as a propeptide.

It belongs to the archaeal flagellin family. Post-translationally, glycosylated.

The protein resides in the archaeal flagellum. Flagellin is the subunit protein which polymerizes to form the filaments of archaeal flagella. This is Flagellin A2 (flaA2) from Halobacterium salinarum (strain ATCC 700922 / JCM 11081 / NRC-1) (Halobacterium halobium).